A 124-amino-acid polypeptide reads, in one-letter code: Holo-[acyl-carrier-protein] synthase (124 aa).

Residues Asp-8 and Glu-58 each contribute to the Mg(2+) site.

The protein belongs to the P-Pant transferase superfamily. AcpS family. Requires Mg(2+) as cofactor.

The protein localises to the cytoplasm. It catalyses the reaction apo-[ACP] + CoA = holo-[ACP] + adenosine 3',5'-bisphosphate + H(+). Its function is as follows. Transfers the 4'-phosphopantetheine moiety from coenzyme A to a Ser of acyl-carrier-protein. In Lacticaseibacillus casei (strain BL23) (Lactobacillus casei), this protein is Holo-[acyl-carrier-protein] synthase.